We begin with the raw amino-acid sequence, 247 residues long: ATP synthase subunit a, chloroplastic (247 aa).

The next 5 helical transmembrane spans lie at 38–58 (QVLI…TVAV), 95–115 (VPFI…GALL), 134–154 (INTT…AGLT), 199–219 (LVVV…VMFL), and 220–240 (GLFT…AYIG).

It belongs to the ATPase A chain family. As to quaternary structure, F-type ATPases have 2 components, CF(1) - the catalytic core - and CF(0) - the membrane proton channel. CF(1) has five subunits: alpha(3), beta(3), gamma(1), delta(1), epsilon(1). CF(0) has four main subunits: a, b, b' and c.

It localises to the plastid. It is found in the chloroplast thylakoid membrane. Its function is as follows. Key component of the proton channel; it plays a direct role in the translocation of protons across the membrane. The chain is ATP synthase subunit a, chloroplastic from Platanus occidentalis (Sycamore).